The following is a 347-amino-acid chain: Anthranilate phosphoribosyltransferase (347 aa).

5-phospho-alpha-D-ribose 1-diphosphate is bound by residues Gly-88, 91–92, Thr-96, 98–101, 116–124, and Ser-128; these read GD, NIST, and KHGNRSVSS. Gly-88 is an anthranilate binding site. Ser-100 lines the Mg(2+) pocket. Asn-119 serves as a coordination point for anthranilate. Residue Arg-174 participates in anthranilate binding. Positions 232 and 233 each coordinate Mg(2+).

The protein belongs to the anthranilate phosphoribosyltransferase family. Homodimer. Requires Mg(2+) as cofactor.

It carries out the reaction N-(5-phospho-beta-D-ribosyl)anthranilate + diphosphate = 5-phospho-alpha-D-ribose 1-diphosphate + anthranilate. The protein operates within amino-acid biosynthesis; L-tryptophan biosynthesis; L-tryptophan from chorismate: step 2/5. Catalyzes the transfer of the phosphoribosyl group of 5-phosphorylribose-1-pyrophosphate (PRPP) to anthranilate to yield N-(5'-phosphoribosyl)-anthranilate (PRA). This chain is Anthranilate phosphoribosyltransferase, found in Shewanella oneidensis (strain ATCC 700550 / JCM 31522 / CIP 106686 / LMG 19005 / NCIMB 14063 / MR-1).